A 369-amino-acid polypeptide reads, in one-letter code: Phenylalanine--tRNA ligase alpha subunit (369 aa).

Residue Glu-270 coordinates Mg(2+).

This sequence belongs to the class-II aminoacyl-tRNA synthetase family. Phe-tRNA synthetase alpha subunit type 1 subfamily. As to quaternary structure, tetramer of two alpha and two beta subunits. Mg(2+) serves as cofactor.

It localises to the cytoplasm. It catalyses the reaction tRNA(Phe) + L-phenylalanine + ATP = L-phenylalanyl-tRNA(Phe) + AMP + diphosphate + H(+). This Phenylobacterium zucineum (strain HLK1) protein is Phenylalanine--tRNA ligase alpha subunit.